An 812-amino-acid chain; its full sequence is Probable inorganic carbon transporter subunit DabA (812 aa).

Zn(2+)-binding residues include Cys-338, Asp-340, His-498, and Cys-513.

This sequence belongs to the inorganic carbon transporter (TC 9.A.2) DabA family. Forms a complex with DabB. Zn(2+) is required as a cofactor.

Its subcellular location is the cell inner membrane. In terms of biological role, part of an energy-coupled inorganic carbon pump. The polypeptide is Probable inorganic carbon transporter subunit DabA (Methylobacterium sp. (strain 4-46)).